Consider the following 364-residue polypeptide: Lytic cellulose monooxygenase (364 aa).

Residues 1 to 34 (MARRSRYISLAAVMATLLSALGVTFLLGQGRAEA) form the signal peptide. Residues histidine 35 and histidine 144 each contribute to the Cu cation site. Residues 35 to 225 (HGVAMMPGSR…QENFFSCSDV (191 aa)) form the Chitin-binding type-4 domain. Positions 234 to 261 (VTGIRGSGGTPTPTPTPTTPPTTPPPTH) are disordered. Pro residues predominate over residues 245 to 260 (TPTPTPTTPPTTPPPT). The 107-residue stretch at 258–364 (PPTHSGSCMA…PVGTIGCVAP (107 aa)) folds into the CBM2 domain.

Cu(2+) is required as a cofactor.

It localises to the secreted. It carries out the reaction [(1-&gt;4)-beta-D-glucosyl]n+m + reduced acceptor + O2 = [(1-&gt;4)-beta-D-glucosyl]m-1-(1-&gt;4)-D-glucono-1,5-lactone + [(1-&gt;4)-beta-D-glucosyl]n + acceptor + H2O.. Its pathway is glycan metabolism; cellulose degradation. In terms of biological role, involved in the degradation of lignocellulosic biomass. Catalyzes the oxidative cleavage of glycosidic bonds in cellulosic substrates via a copper-dependent mechanism. Degrades phosphoric acid swollen cellulose (PASC) to oxidized cellooligosaccharides with degrees of polymerization of 4-8. Also shows activity on agricultural fiber paper pulps such as flax pulp. Is not active on chitin. This is Lytic cellulose monooxygenase from Streptomyces ambofaciens (strain ATCC 23877 / 3486 / DSM 40053 / JCM 4204 / NBRC 12836 / NRRL B-2516).